The chain runs to 220 residues: Tumor protein p53-inducible nuclear protein 2 (220 aa).

A compositionally biased stretch (low complexity) spans 1-12 (MFQRLSSLFFST). Disordered regions lie at residues 1–24 (MFQRLSSLFFSTPSPPEDPDCPRA), 41–69 (PDSYAAPPSPGAAPAPAGRPPPAPSLMDE), and 119–220 (PGSP…QFNY). Ser14 carries the phosphoserine modification. The short motif at 26–41 (VSEEDEVDGWLIIDLP) is the LIR element. A compositionally biased stretch (pro residues) spans 47–64 (PPSPGAAPAPAGRPPPAP). A Phosphoserine modification is found at Ser136. Over residues 152-170 (HAAPLPARAALLEKAGQVR) the composition is skewed to low complexity. Polar residues predominate over residues 205–220 (NQSSFIYQPCQRQFNY).

As to quaternary structure, interacts with VMP1, GABARAP, GABARAPL1, GABARAPL2, MAP1LC3A, MAP1LC3B, MAP1LC3C and THRA.

The protein localises to the cytoplasm. It is found in the cytosol. The protein resides in the nucleus. Its subcellular location is the PML body. It localises to the cytoplasmic vesicle. The protein localises to the autophagosome. Dual regulator of transcription and autophagy. Positively regulates autophagy and is required for autophagosome formation and processing. May act as a scaffold protein that recruits MAP1LC3A, GABARAP and GABARAPL2 and brings them to the autophagosome membrane by interacting with VMP1 where, in cooperation with the BECN1-PI3-kinase class III complex, they trigger autophagosome development. Acts as a transcriptional activator of THRA. The protein is Tumor protein p53-inducible nuclear protein 2 (TP53INP2) of Homo sapiens (Human).